Consider the following 248-residue polypeptide: 4-hydroxy-tetrahydrodipicolinate reductase (248 aa).

Residues 9-14, 77-79, and 104-107 each bind NAD(+); these read GAQGRV, GTT, and APNF. The active-site Proton donor/acceptor is the histidine 134. Histidine 135 lines the (S)-2,3,4,5-tetrahydrodipicolinate pocket. Residue lysine 138 is the Proton donor of the active site. 144-145 lines the (S)-2,3,4,5-tetrahydrodipicolinate pocket; the sequence is GT. Residues 157 to 176 form a disordered region; the sequence is RREAGMPTQPDATEQSLDGA.

Belongs to the DapB family.

It is found in the cytoplasm. The enzyme catalyses (S)-2,3,4,5-tetrahydrodipicolinate + NAD(+) + H2O = (2S,4S)-4-hydroxy-2,3,4,5-tetrahydrodipicolinate + NADH + H(+). It catalyses the reaction (S)-2,3,4,5-tetrahydrodipicolinate + NADP(+) + H2O = (2S,4S)-4-hydroxy-2,3,4,5-tetrahydrodipicolinate + NADPH + H(+). It participates in amino-acid biosynthesis; L-lysine biosynthesis via DAP pathway; (S)-tetrahydrodipicolinate from L-aspartate: step 4/4. Catalyzes the conversion of 4-hydroxy-tetrahydrodipicolinate (HTPA) to tetrahydrodipicolinate. The sequence is that of 4-hydroxy-tetrahydrodipicolinate reductase from Corynebacterium diphtheriae (strain ATCC 700971 / NCTC 13129 / Biotype gravis).